The sequence spans 354 residues: Uroporphyrinogen decarboxylase (354 aa).

Substrate-binding positions include 27 to 31 (RQAGR), Asp77, Tyr154, Thr209, and His327.

Belongs to the uroporphyrinogen decarboxylase family. In terms of assembly, homodimer.

It is found in the cytoplasm. It catalyses the reaction uroporphyrinogen III + 4 H(+) = coproporphyrinogen III + 4 CO2. It functions in the pathway porphyrin-containing compound metabolism; protoporphyrin-IX biosynthesis; coproporphyrinogen-III from 5-aminolevulinate: step 4/4. Functionally, catalyzes the decarboxylation of four acetate groups of uroporphyrinogen-III to yield coproporphyrinogen-III. This chain is Uroporphyrinogen decarboxylase, found in Pseudomonas entomophila (strain L48).